We begin with the raw amino-acid sequence, 90 residues long: Hemoglobin subunit alpha-1 (90 aa).

Positions Val-1–Lys-90 constitute a Globin domain.

It belongs to the globin family. In terms of assembly, heterotetramer of two alpha chains and two beta chains. In terms of tissue distribution, red blood cells.

Involved in oxygen transport from the lung to the various peripheral tissues. In Saara hardwickii (Indian spiny-tailed lizard), this protein is Hemoglobin subunit alpha-1.